The sequence spans 605 residues: Aspartate--tRNA(Asp/Asn) ligase (605 aa).

L-aspartate is bound at residue Glu183. The aspartate stretch occupies residues 207–210 (QLYK). Arg229 is a binding site for L-aspartate. ATP-binding positions include 229 to 231 (RDE) and Gln238. His456 is an L-aspartate binding site. ATP is bound at residue Glu490. Arg497 contributes to the L-aspartate binding site. ATP is bound at residue 542–545 (GLDR).

This sequence belongs to the class-II aminoacyl-tRNA synthetase family. Type 1 subfamily. As to quaternary structure, homodimer.

The protein localises to the cytoplasm. It carries out the reaction tRNA(Asx) + L-aspartate + ATP = L-aspartyl-tRNA(Asx) + AMP + diphosphate. Functionally, aspartyl-tRNA synthetase with relaxed tRNA specificity since it is able to aspartylate not only its cognate tRNA(Asp) but also tRNA(Asn). Reaction proceeds in two steps: L-aspartate is first activated by ATP to form Asp-AMP and then transferred to the acceptor end of tRNA(Asp/Asn). In Heliobacterium modesticaldum (strain ATCC 51547 / Ice1), this protein is Aspartate--tRNA(Asp/Asn) ligase.